Reading from the N-terminus, the 87-residue chain is Small ribosomal subunit protein uS15c (87 aa).

Belongs to the universal ribosomal protein uS15 family. Part of the 30S ribosomal subunit.

Its subcellular location is the plastid. It is found in the chloroplast. This is Small ribosomal subunit protein uS15c (rps15) from Coffea arabica (Arabian coffee).